Reading from the N-terminus, the 324-residue chain is Uroporphyrinogen decarboxylase (324 aa).

Residues 14-18, phenylalanine 32, aspartate 63, tyrosine 136, serine 191, and histidine 302 each bind substrate; that span reads RQAGR.

It belongs to the uroporphyrinogen decarboxylase family. Homodimer.

Its subcellular location is the cytoplasm. The enzyme catalyses uroporphyrinogen III + 4 H(+) = coproporphyrinogen III + 4 CO2. It participates in porphyrin-containing compound metabolism; protoporphyrin-IX biosynthesis; coproporphyrinogen-III from 5-aminolevulinate: step 4/4. Catalyzes the decarboxylation of four acetate groups of uroporphyrinogen-III to yield coproporphyrinogen-III. The chain is Uroporphyrinogen decarboxylase from Neorickettsia sennetsu (strain ATCC VR-367 / Miyayama) (Ehrlichia sennetsu).